The following is an 864-amino-acid chain: Leucine--tRNA ligase (864 aa).

Positions 42-52 (PYPSGKLHMGH) match the 'HIGH' region motif. Positions 619-623 (KMSKS) match the 'KMSKS' region motif. Lys-622 is a binding site for ATP.

The protein belongs to the class-I aminoacyl-tRNA synthetase family.

It is found in the cytoplasm. It carries out the reaction tRNA(Leu) + L-leucine + ATP = L-leucyl-tRNA(Leu) + AMP + diphosphate. This is Leucine--tRNA ligase from Wigglesworthia glossinidia brevipalpis.